Here is a 300-residue protein sequence, read N- to C-terminus: Pleckstrin homology domain-containing family A member 3 (300 aa).

Residues 1-93 (MEGVLYKWTN…WLVALGSSKA (93 aa)) form the PH domain. Residues 1–100 (MEGVLYKWTN…SKACLTDTRT (100 aa)) are interaction with SACM1L. Positions 97–300 (DTRTKKEKEI…SEDTLPSFSS (204 aa)) are interaction with VAPA and VAPB. The interval 197-300 (PVSPSPVQMM…SEDTLPSFSS (104 aa)) is disordered. Phosphoserine is present on residues serine 236 and serine 244. A compositionally biased stretch (basic and acidic residues) spans 279–290 (EESRLMAKKQSE).

As to quaternary structure, interacts with GTP-bound ARF1. Interacts with SACM1L and VAPA and/or VAPB to form a ternary complex. Widely expressed.

It localises to the golgi apparatus. The protein localises to the trans-Golgi network membrane. In terms of biological role, plays a role in regulation of vesicular cargo transport from the trans-Golgi network (TGN) to the plasma membrane. Regulates Golgi phosphatidylinositol 4-phosphate (PtdIns(4)P) levels and activates the PtdIns(4)P phosphatase activity of SACM1L when it binds PtdIns(4)P in 'trans' configuration. Binds preferentially to PtdIns(4)P. Negatively regulates APOB secretion from hepatocytes. The sequence is that of Pleckstrin homology domain-containing family A member 3 (PLEKHA3) from Homo sapiens (Human).